The following is a 73-amino-acid chain: Large ribosomal subunit protein bL31 (73 aa).

It belongs to the bacterial ribosomal protein bL31 family. Type A subfamily. Part of the 50S ribosomal subunit.

Its function is as follows. Binds the 23S rRNA. In Ruegeria sp. (strain TM1040) (Silicibacter sp.), this protein is Large ribosomal subunit protein bL31.